The primary structure comprises 187 residues: MTHILTLDNAVATLTQGGVIAYPTEAVWGLGCDPRQEAAVLRLLEIKRRPVDKGVIVVTSRVDVLRDWVDIDALAPARRQDVLASWPGPHTWILPVTARAPRWVTGEHDGLAVRISAHPVVAALCAAWGAPLVSTSANLAGEPPARSRAALEPALLATIDGVVDGEVGALAQPTRIRDARSGQILRD.

The region spanning 4–187 (ILTLDNAVAT…DARSGQILRD (184 aa)) is the YrdC-like domain.

Belongs to the SUA5 family. TsaC subfamily.

The protein resides in the cytoplasm. It catalyses the reaction L-threonine + hydrogencarbonate + ATP = L-threonylcarbamoyladenylate + diphosphate + H2O. Required for the formation of a threonylcarbamoyl group on adenosine at position 37 (t(6)A37) in tRNAs that read codons beginning with adenine. Catalyzes the conversion of L-threonine, HCO(3)(-)/CO(2) and ATP to give threonylcarbamoyl-AMP (TC-AMP) as the acyladenylate intermediate, with the release of diphosphate. This is Threonylcarbamoyl-AMP synthase from Xanthomonas oryzae pv. oryzae (strain MAFF 311018).